The sequence spans 230 residues: Potassium/proton antiporter CemA (230 aa).

Transmembrane regions (helical) follow at residues 7–27, 107–127, 145–165, and 181–201; these read LPSLLYLVFIVLLPWGVSSSF, ILHFSTNIICLAILSGSFFLG, LNDSIKAFFILLVTDFFVGFH, and FGWAPNELIFTIFVCSFPVIL.

The protein belongs to the CemA family.

It is found in the plastid. The protein localises to the chloroplast inner membrane. The enzyme catalyses K(+)(in) + H(+)(out) = K(+)(out) + H(+)(in). Functionally, contributes to K(+)/H(+) antiport activity by supporting proton efflux to control proton extrusion and homeostasis in chloroplasts in a light-dependent manner to modulate photosynthesis. Prevents excessive induction of non-photochemical quenching (NPQ) under continuous-light conditions. Indirectly promotes efficient inorganic carbon uptake into chloroplasts. The sequence is that of Potassium/proton antiporter CemA from Triticum aestivum (Wheat).